The chain runs to 257 residues: Pyridoxine/pyridoxamine 5'-phosphate oxidase (257 aa).

Residue 33–36 (RIKY) coordinates substrate. Residue 90–93 (RFVL) participates in FMN binding. Position 95 (lysine 95) interacts with pyridoxal 5'-phosphate. FMN-binding positions include 105-106 (YT) and lysine 112. Pyridoxal 5'-phosphate-binding residues include tyrosine 152, arginine 156, and serine 160. FMN is bound by residues 169–170 (QS) and tryptophan 216. Residue 222–224 (RLH) coordinates substrate. Arginine 226 contributes to the FMN binding site.

Belongs to the pyridoxamine 5'-phosphate oxidase family. As to quaternary structure, homodimer. Requires FMN as cofactor. Expressed in silk gland and fat body of the larva.

The catalysed reaction is pyridoxamine 5'-phosphate + O2 + H2O = pyridoxal 5'-phosphate + H2O2 + NH4(+). The enzyme catalyses pyridoxine 5'-phosphate + O2 = pyridoxal 5'-phosphate + H2O2. It functions in the pathway cofactor metabolism; pyridoxal 5'-phosphate salvage; pyridoxal 5'-phosphate from pyridoxamine 5'-phosphate: step 1/1. Its pathway is cofactor metabolism; pyridoxal 5'-phosphate salvage; pyridoxal 5'-phosphate from pyridoxine 5'-phosphate: step 1/1. Functionally, catalyzes the oxidation of either pyridoxine 5'-phosphate (PNP) or pyridoxamine 5'-phosphate (PMP) into pyridoxal 5'-phosphate (PLP). This is Pyridoxine/pyridoxamine 5'-phosphate oxidase from Bombyx mori (Silk moth).